The chain runs to 346 residues: Holliday junction branch migration complex subunit RuvB (346 aa).

Over residues 1–11 the composition is skewed to polar residues; it reads MTEQRTIASSA. The tract at residues 1–20 is disordered; it reads MTEQRTIASSATREDEAADA. The interval 1–183 is large ATPase domain (RuvB-L); sequence MTEQRTIASS…FGIVQRLEFY (183 aa). ATP is bound by residues isoleucine 22, arginine 23, glycine 64, lysine 67, threonine 68, threonine 69, 130–132, arginine 173, tyrosine 183, and arginine 220; that span reads EDF. Threonine 68 is a binding site for Mg(2+). The interval 184-254 is small ATPAse domain (RuvB-S); the sequence is SPQELTRIVI…VAQAAMQMLK (71 aa). The tract at residues 257-346 is head domain (RuvB-H); the sequence is PEGFDELDRR…PAIGEPGDLF (90 aa). 3 residues coordinate DNA: arginine 293, arginine 312, and arginine 317.

The protein belongs to the RuvB family. As to quaternary structure, homohexamer. Forms an RuvA(8)-RuvB(12)-Holliday junction (HJ) complex. HJ DNA is sandwiched between 2 RuvA tetramers; dsDNA enters through RuvA and exits via RuvB. An RuvB hexamer assembles on each DNA strand where it exits the tetramer. Each RuvB hexamer is contacted by two RuvA subunits (via domain III) on 2 adjacent RuvB subunits; this complex drives branch migration. In the full resolvosome a probable DNA-RuvA(4)-RuvB(12)-RuvC(2) complex forms which resolves the HJ.

Its subcellular location is the cytoplasm. It catalyses the reaction ATP + H2O = ADP + phosphate + H(+). Its function is as follows. The RuvA-RuvB-RuvC complex processes Holliday junction (HJ) DNA during genetic recombination and DNA repair, while the RuvA-RuvB complex plays an important role in the rescue of blocked DNA replication forks via replication fork reversal (RFR). RuvA specifically binds to HJ cruciform DNA, conferring on it an open structure. The RuvB hexamer acts as an ATP-dependent pump, pulling dsDNA into and through the RuvAB complex. RuvB forms 2 homohexamers on either side of HJ DNA bound by 1 or 2 RuvA tetramers; 4 subunits per hexamer contact DNA at a time. Coordinated motions by a converter formed by DNA-disengaged RuvB subunits stimulates ATP hydrolysis and nucleotide exchange. Immobilization of the converter enables RuvB to convert the ATP-contained energy into a lever motion, pulling 2 nucleotides of DNA out of the RuvA tetramer per ATP hydrolyzed, thus driving DNA branch migration. The RuvB motors rotate together with the DNA substrate, which together with the progressing nucleotide cycle form the mechanistic basis for DNA recombination by continuous HJ branch migration. Branch migration allows RuvC to scan DNA until it finds its consensus sequence, where it cleaves and resolves cruciform DNA. This chain is Holliday junction branch migration complex subunit RuvB, found in Xanthomonas campestris pv. campestris (strain ATCC 33913 / DSM 3586 / NCPPB 528 / LMG 568 / P 25).